The following is a 144-amino-acid chain: Ninjurin-2 (144 aa).

Over 1-62 (MESDREIIHL…KSVLEQGPFS (62 aa)) the chain is Extracellular. Residues 27 to 39 (NHYATKKSVAESM) form a helix alpha1 region. Positions 40–59 (LDVALFMSNAMRLKSVLEQG) are helix alpha2. The helical transmembrane segment at 63-94 (QYYTTLLTLISASLLLQVVIGILLVVIARLNL) threads the bilayer. Residues 95–98 (NEVE) lie on the Cytoplasmic side of the membrane. The helical transmembrane segment at 99 to 128 (NQWRLNQLNNAATTLVFITVVINIFITAFG) threads the bilayer. Position 105 (Gln105) interacts with cholesterol. Topologically, residues 129-144 (AHKTGSVAARTSSNPI) are extracellular.

The protein belongs to the ninjurin family. Homooligomer; in response to stimuli, homooligomerizes into filaments. In contrast to NINJ1, the filament is curved toward the intracellular space, preventing its circularization on a relatively flat membrane to mediate plasma membrane rupture: curvature is caused by cholesterol-binding at the cytoplasmic leaflet.

The protein resides in the cell membrane. Its function is as follows. Its role in unclear. In contrast to NINJ1 paralog, does not mediate plasma membrane rupture (cytolysis) downstream of necroptotic and pyroptotic programmed cell death. While it is able to oligomerize and form filaments, filaments are curved toward the intracellular space, preventing circularization to mediate plasma membrane rupture. May act as a homophilic transmembrane adhesion molecule involved in nerve regeneration. Promotes axonal growth. The sequence is that of Ninjurin-2 (Ninj2) from Rattus norvegicus (Rat).